We begin with the raw amino-acid sequence, 101 residues long: MAKQSMKAREVKRVALADKYFAKRAELKAIISDVNATDEDRWNAVLKLQTLPRDSSPSRQRNRCRQTGRPHAFLRKFGLSRIKVREAAMRGEIPGLKKASW.

This sequence belongs to the universal ribosomal protein uS14 family. Part of the 30S ribosomal subunit. Contacts proteins S3 and S10.

Its function is as follows. Binds 16S rRNA, required for the assembly of 30S particles and may also be responsible for determining the conformation of the 16S rRNA at the A site. This Salmonella schwarzengrund (strain CVM19633) protein is Small ribosomal subunit protein uS14.